We begin with the raw amino-acid sequence, 386 residues long: Orphan methyltransferase M.SssI (386 aa).

The SAM-dependent MTase C5-type domain occupies 11–386 (LRVFEAFAGI…LEAIIDKIGG (376 aa)). Residue Cys-141 is part of the active site.

Belongs to the class I-like SAM-binding methyltransferase superfamily. C5-methyltransferase family.

The catalysed reaction is a 2'-deoxycytidine in DNA + S-adenosyl-L-methionine = a 5-methyl-2'-deoxycytidine in DNA + S-adenosyl-L-homocysteine + H(+). Its function is as follows. This de novo methylase acts completely and exclusively on CG residues in DNA; methylates unmethylated and hemi-methylated DNA. The sequence is that of Orphan methyltransferase M.SssI (sssIM) from Spiroplasma monobiae (strain ATCC 33825 / MQ-1).